A 37-amino-acid polypeptide reads, in one-letter code: Large ribosomal subunit protein bL36 (37 aa).

The protein belongs to the bacterial ribosomal protein bL36 family.

The protein is Large ribosomal subunit protein bL36 of Mycobacterium ulcerans (strain Agy99).